We begin with the raw amino-acid sequence, 263 residues long: Thiazole synthase (263 aa).

The active-site Schiff-base intermediate with DXP is lysine 100. Residues glycine 161, 187–188 (AG), and 209–210 (NT) contribute to the 1-deoxy-D-xylulose 5-phosphate site.

This sequence belongs to the ThiG family. Homotetramer. Forms heterodimers with either ThiH or ThiS.

It localises to the cytoplasm. The catalysed reaction is [ThiS sulfur-carrier protein]-C-terminal-Gly-aminoethanethioate + 2-iminoacetate + 1-deoxy-D-xylulose 5-phosphate = [ThiS sulfur-carrier protein]-C-terminal Gly-Gly + 2-[(2R,5Z)-2-carboxy-4-methylthiazol-5(2H)-ylidene]ethyl phosphate + 2 H2O + H(+). It functions in the pathway cofactor biosynthesis; thiamine diphosphate biosynthesis. Catalyzes the rearrangement of 1-deoxy-D-xylulose 5-phosphate (DXP) to produce the thiazole phosphate moiety of thiamine. Sulfur is provided by the thiocarboxylate moiety of the carrier protein ThiS. In vitro, sulfur can be provided by H(2)S. In Shouchella clausii (strain KSM-K16) (Alkalihalobacillus clausii), this protein is Thiazole synthase.